The chain runs to 116 residues: Putative UPF0320 protein YJR162C (116 aa).

This sequence belongs to the UPF0320 family.

This is Putative UPF0320 protein YJR162C from Saccharomyces cerevisiae (strain ATCC 204508 / S288c) (Baker's yeast).